A 463-amino-acid polypeptide reads, in one-letter code: Fumarate hydratase class II (463 aa).

Residues 97 to 99 (SGT), 128 to 131 (HPND), 138 to 140 (SSN), and Thr186 contribute to the substrate site. The Proton donor/acceptor role is filled by His187. Ser317 is an active-site residue. Substrate is bound by residues Ser318 and 323-325 (KVN).

It belongs to the class-II fumarase/aspartase family. Fumarase subfamily. Homotetramer.

The protein resides in the cytoplasm. The enzyme catalyses (S)-malate = fumarate + H2O. It participates in carbohydrate metabolism; tricarboxylic acid cycle; (S)-malate from fumarate: step 1/1. In terms of biological role, involved in the TCA cycle. Catalyzes the stereospecific interconversion of fumarate to L-malate. The chain is Fumarate hydratase class II from Helicobacter pylori (strain J99 / ATCC 700824) (Campylobacter pylori J99).